A 208-amino-acid polypeptide reads, in one-letter code: Protein-L-isoaspartate O-methyltransferase (208 aa).

S59 is an active-site residue.

It belongs to the methyltransferase superfamily. L-isoaspartyl/D-aspartyl protein methyltransferase family.

The protein resides in the cytoplasm. It carries out the reaction [protein]-L-isoaspartate + S-adenosyl-L-methionine = [protein]-L-isoaspartate alpha-methyl ester + S-adenosyl-L-homocysteine. Its function is as follows. Catalyzes the methyl esterification of L-isoaspartyl residues in peptides and proteins that result from spontaneous decomposition of normal L-aspartyl and L-asparaginyl residues. It plays a role in the repair and/or degradation of damaged proteins. This chain is Protein-L-isoaspartate O-methyltransferase, found in Aliivibrio salmonicida (strain LFI1238) (Vibrio salmonicida (strain LFI1238)).